Consider the following 82-residue polypeptide: MSEAGTPEAPIKKKRPPVKEEDLKGARGSLSKNQEIKSKTYQVMRDYEQAGSAAPSIFSRNRTGTETVFEKPKEGPAKSVFG.

Disordered regions lie at residues 1 to 37 (MSEA…QEIK) and 51 to 82 (GSAA…SVFG). Ser2 is modified (phosphoserine). Position 6 is a phosphothreonine (Thr6). The Nuclear localization signal signature appears at 10–18 (PIKKKRPPV).

This sequence belongs to the MUSTN1 family. As to expression, expressed specifically in the musculoskeletal system (skeletal muscle and tendon). Highly expressed during bone regeneration, especially during the early phases (post fracure days 3 and 5). Expression within the fracture callus is localized in osteoprogenitor cells of the periosteum, proliferating chondrocytes, and young active osteoblasts.

The protein localises to the nucleus. It is found in the cytoplasm. The protein resides in the secreted. It localises to the extracellular space. Functionally, required for chondrocyte development and proliferation. Plays a role in myoblast differentiation and fusion. Modulates skeletal muscle extracellular matrix composition. Plays a role in skeletal muscle function. Plays a role in glucose homeostasis. This is Musculoskeletal embryonic nuclear protein 1 (Mustn1) from Rattus norvegicus (Rat).